The primary structure comprises 586 residues: Mitochondrial tRNA methylthiotransferase CDK5RAP1 (586 aa).

The transit peptide at 1–30 (MHPLQRVFRAQRLSAPLTSMCWVLLRTFRA) directs the protein to the mitochondrion. The interval 68-90 (ASVPQEKPSSPEVEDPPPYLSGD) is disordered. One can recognise an MTTase N-terminal domain in the interval 97–217 (RKVYLETYGC…LPRLLAVVES (121 aa)). The [4Fe-4S] cluster site is built by C106, C142, C180, C255, C259, and C262. Positions 241–495 (SPSATSAFVS…ITVFREEASK (255 aa)) constitute a Radical SAM core domain. The TRAM domain maps to 498–573 (ATSVGCTQLV…SQTLKGHILC (76 aa)).

The protein belongs to the methylthiotransferase family. MiaB subfamily. Interacts with CDK5R1 (p35 form). CDK5RAP1, CDK5RAP2 and CDK5RAP3 show competitive binding to CDK5R1. Forms a complex with CDK5R1 and CDK5. It depends on [4Fe-4S] cluster as a cofactor. In terms of tissue distribution, expressed in brain.

The protein resides in the mitochondrion inner membrane. The catalysed reaction is N(6)-dimethylallyladenosine(37) in tRNA + (sulfur carrier)-SH + AH2 + 2 S-adenosyl-L-methionine = 2-methylsulfanyl-N(6)-dimethylallyladenosine(37) in tRNA + (sulfur carrier)-H + 5'-deoxyadenosine + L-methionine + A + S-adenosyl-L-homocysteine + 2 H(+). In terms of biological role, methylthiotransferase that catalyzes the conversion of N6-(dimethylallyl)adenosine (i(6)A) to 2-methylthio-N6-(dimethylallyl)adenosine (ms(2)i(6)A) at position 37 (adjacent to the 3'-end of the anticodon) of four mitochondrial DNA-encoded tRNAs (Ser(UCN), Phe, Tyr and Trp). Essential for efficient and highly accurate protein translation by the ribosome. Specifically inhibits CDK5 activation by CDK5R1. Essential for efficient mitochondrial protein synthesis and respiratory chain. The sequence is that of Mitochondrial tRNA methylthiotransferase CDK5RAP1 (Cdk5rap1) from Rattus norvegicus (Rat).